Consider the following 330-residue polypeptide: Aspartate--ammonia ligase (330 aa).

This sequence belongs to the class-II aminoacyl-tRNA synthetase family. AsnA subfamily.

The protein localises to the cytoplasm. It carries out the reaction L-aspartate + NH4(+) + ATP = L-asparagine + AMP + diphosphate + H(+). It functions in the pathway amino-acid biosynthesis; L-asparagine biosynthesis; L-asparagine from L-aspartate (ammonia route): step 1/1. This Photorhabdus laumondii subsp. laumondii (strain DSM 15139 / CIP 105565 / TT01) (Photorhabdus luminescens subsp. laumondii) protein is Aspartate--ammonia ligase.